The primary structure comprises 419 residues: MAGDSRNAMNQDMEIGVTSQDHKKIPKQARDYIPIATDRTRLLPEGKKPRQRYMEKTGKCNVHHGNVQETYRYLSDLFTTLVDLKWRFNLLVFTMVYTITWLFFGFIWWLIAYVRGDLDHVGDQEWIPCVENLSGFVSAFLFSIETETTIGYGFRVITEKCPEGIILLLVQAILGSIVNAFMVGCMFVKISQPKKRAETLMFSNNAVISMRDEKLCLMFRVGDLRNSHIVEASIRAKLIKSRQTKEGEFIPLNQTDINVGFDTGDDRLFLVSPLIISHEINEKSPFWEMSRAQLEQEEFEVVVILEGMVEATGMTCQARSSYMDTEVLWGHRFTPVLTLEKGFYEVDYNTFHDTYETNTPSCCAKELAEMKRNGQLLQSLPSPPLLGGCAEAEKEAEAEHDEEEEPNGLSVSRATRGSM.

Residues 1-86 (MAGDSRNAMN…LFTTLVDLKW (86 aa)) are Cytoplasmic-facing. Position 5 is a phosphoserine (Ser-5). Residues 87-111 (RFNLLVFTMVYTITWLFFGFIWWLI) traverse the membrane as a helical segment. The Extracellular segment spans residues 112–135 (AYVRGDLDHVGDQEWIPCVENLSG). Residues 136–147 (FVSAFLFSIETE) constitute an intramembrane region (helical; Pore-forming). Residues 148–154 (TTIGYGF) constitute an intramembrane region (pore-forming). The short motif at 149 to 154 (TIGYGF) is the Selectivity filter element. At 155-163 (RVITEKCPE) the chain is on the extracellular side. The chain crosses the membrane as a helical span at residues 164 to 185 (GIILLLVQAILGSIVNAFMVGC). Residues 186-419 (MFVKISQPKK…SVSRATRGSM (234 aa)) are Cytoplasmic-facing. The span at 380–390 (LPSPPLLGGCA) shows a compositional bias: low complexity. The segment at 380 to 419 (LPSPPLLGGCAEAEKEAEAEHDEEEEPNGLSVSRATRGSM) is disordered. The segment covering 409–419 (LSVSRATRGSM) has biased composition (polar residues).

Belongs to the inward rectifier-type potassium channel (TC 1.A.2.1) family. KCNJ5 subfamily. As to quaternary structure, associates with KCNJ3/GIRK1 or KCNJ6/GRIK2 to form a G-protein-activated heteromultimer pore-forming unit. The resulting inward current is much larger. As to expression, most abundant in heart tissue where it is found predominantly in atria. Also found in brain, kidney, liver, spleen, lung and thymus.

It localises to the membrane. It carries out the reaction K(+)(in) = K(+)(out). Heteromultimer composed of KCNJ3/GIRK1 and KCNJ5/GIRK4 is activated by phosphatidylinositol 4,5 biphosphate (PtdIns(4,5)P2). In terms of biological role, inward rectifier potassium channels are characterized by a greater tendency to allow potassium to flow into the cell rather than out of it. Their voltage dependence is regulated by the concentration of extracellular potassium; as external potassium is raised, the voltage range of the channel opening shifts to more positive voltages. The inward rectification is mainly due to the blockage of outward current by internal magnesium. Can be blocked by external barium. This potassium channel is controlled by G proteins. The polypeptide is G protein-activated inward rectifier potassium channel 4 (Kcnj5) (Rattus norvegicus (Rat)).